A 201-amino-acid chain; its full sequence is Recombination protein RecR (201 aa).

A C4-type zinc finger spans residues 57–72; the sequence is CADCRTFTEQEICTIC. The Toprim domain maps to 81 to 176; sequence GLICVVESPA…DASRIAHGVP (96 aa).

Belongs to the RecR family.

Functionally, may play a role in DNA repair. It seems to be involved in an RecBC-independent recombinational process of DNA repair. It may act with RecF and RecO. This Erwinia tasmaniensis (strain DSM 17950 / CFBP 7177 / CIP 109463 / NCPPB 4357 / Et1/99) protein is Recombination protein RecR.